A 475-amino-acid polypeptide reads, in one-letter code: Cytochrome P450 monooxygenase sthD (475 aa).

The N-terminal stretch at M1–R17 is a signal peptide. Residues F276–L296 form a helical membrane-spanning segment. An N-linked (GlcNAc...) asparagine glycan is attached at N336. C418 serves as a coordination point for heme.

Belongs to the cytochrome P450 family. The cofactor is heme.

The protein resides in the membrane. It carries out the reaction betaenone A + NADPH + O2 + H(+) = stemphyloxin II + NADP(+) + H2O. The catalysed reaction is betaenone C + NADPH + O2 + H(+) = stemphyloxin I + NADP(+) + H2O. The protein operates within mycotoxin biosynthesis. Its function is as follows. Cytochrome P450 monooxygenase; part of the gene cluster that mediates the biosynthesis of the phytotoxin stemphyloxin II. The first step of the pathway is the synthesis of dehydroprobetaenone I by the polyketide synthase sthA and the enoyl reductase sthE via condensation of one acetyl-CoA starter unit with 7 malonyl-CoA units and 5 methylations. The C-terminal reductase (R) domain of sthA catalyzes the reductive release of the polyketide chain. Because sthA lacks a designated enoylreductase (ER) domain, the required activity is provided the enoyl reductase sthE. The short-chain dehydrogenase/reductase sthC then catalyzes reduction of dehydroprobetaenone I to probetaenone I. The cytochrome P450 monooxygenase sthF catalyzes successive epoxidation, oxidation (resulting from epoxide opening) and hydroxylation to install a tertiary alcohol in the decaline ring to yield betaenone C from dehydroprobetaenone I and betaenone B from probetaenone I. The FAD-linked oxidoreductase sthB is responsible for the conversion of betaenone C to betaenone A via an intramolecular aldol reaction between C-1 and C-17 to form the bridged tricyclic system in betaenone A. Finally, the cytochrome P450 monooxygenase sthD catalyzes the hydroxylation of C-15 to afford the final metabolite stemphyloxin II. The polypeptide is Cytochrome P450 monooxygenase sthD (Phaeosphaeria nodorum (strain SN15 / ATCC MYA-4574 / FGSC 10173) (Glume blotch fungus)).